The following is a 340-amino-acid chain: Guanine nucleotide-binding protein G(I)/G(S)/G(T) subunit beta-3 (340 aa).

WD repeat units follow at residues 53–83, 95–125, 141–170, 182–212, 224–254, 268–298, and 310–340; these read GHLA…IVWD, LRSS…SIYS, AHTG…ALWD, GHTG…KLWD, GHES…RLFD, SIIC…NVWD, and GHDN…KIWN.

The protein belongs to the WD repeat G protein beta family. In terms of assembly, g proteins are composed of 3 units, alpha, beta and gamma. Interacts with RASD2. As to expression, expressed at a high level in the heart and at a much lower level in the brain.

In terms of biological role, guanine nucleotide-binding proteins (G proteins) are involved as a modulator or transducer in various transmembrane signaling systems. The beta and gamma chains are required for the GTPase activity, for replacement of GDP by GTP, and for G protein-effector interaction. This is Guanine nucleotide-binding protein G(I)/G(S)/G(T) subunit beta-3 (Gnb3) from Rattus norvegicus (Rat).